The chain runs to 1031 residues: Beta-galactosidase (1031 aa).

Substrate is bound by residues Asn-100 and Asp-198. Asp-198 contacts Na(+). 3 residues coordinate Mg(2+): Glu-412, His-414, and Glu-457. Substrate contacts are provided by residues Glu-457 and 533-536 (EYAH). Glu-457 acts as the Proton donor in catalysis. Glu-533 acts as the Nucleophile in catalysis. Asn-593 contacts Mg(2+). Residues Phe-597 and Asn-600 each coordinate Na(+). Positions 600 and 1005 each coordinate substrate.

This sequence belongs to the glycosyl hydrolase 2 family. Homotetramer. Mg(2+) serves as cofactor. Na(+) is required as a cofactor.

It catalyses the reaction Hydrolysis of terminal non-reducing beta-D-galactose residues in beta-D-galactosides.. The chain is Beta-galactosidase from Vibrio vulnificus (strain YJ016).